A 164-amino-acid chain; its full sequence is NADH-quinone oxidoreductase subunit I (164 aa).

4Fe-4S ferredoxin-type domains are found at residues 55 to 85 (LRRY…IDAE) and 95 to 124 (TRYD…EGPN). 8 residues coordinate [4Fe-4S] cluster: C65, C68, C71, C75, C104, C107, C110, and C114.

It belongs to the complex I 23 kDa subunit family. NDH-1 is composed of 14 different subunits. Subunits NuoA, H, J, K, L, M, N constitute the membrane sector of the complex. The cofactor is [4Fe-4S] cluster.

It localises to the cell inner membrane. It carries out the reaction a quinone + NADH + 5 H(+)(in) = a quinol + NAD(+) + 4 H(+)(out). In terms of biological role, NDH-1 shuttles electrons from NADH, via FMN and iron-sulfur (Fe-S) centers, to quinones in the respiratory chain. The immediate electron acceptor for the enzyme in this species is believed to be ubiquinone. Couples the redox reaction to proton translocation (for every two electrons transferred, four hydrogen ions are translocated across the cytoplasmic membrane), and thus conserves the redox energy in a proton gradient. This chain is NADH-quinone oxidoreductase subunit I, found in Ruegeria pomeroyi (strain ATCC 700808 / DSM 15171 / DSS-3) (Silicibacter pomeroyi).